The primary structure comprises 129 residues: Small ribosomal subunit protein uS11 (129 aa).

The protein belongs to the universal ribosomal protein uS11 family. As to quaternary structure, part of the 30S ribosomal subunit. Interacts with proteins S7 and S18. Binds to IF-3.

Located on the platform of the 30S subunit, it bridges several disparate RNA helices of the 16S rRNA. Forms part of the Shine-Dalgarno cleft in the 70S ribosome. The chain is Small ribosomal subunit protein uS11 from Lactobacillus gasseri (strain ATCC 33323 / DSM 20243 / BCRC 14619 / CIP 102991 / JCM 1131 / KCTC 3163 / NCIMB 11718 / NCTC 13722 / AM63).